A 294-amino-acid chain; its full sequence is Elongation factor Ts (294 aa).

Positions 80–83 (TDFV) are involved in Mg(2+) ion dislocation from EF-Tu.

It belongs to the EF-Ts family.

It localises to the cytoplasm. Its function is as follows. Associates with the EF-Tu.GDP complex and induces the exchange of GDP to GTP. It remains bound to the aminoacyl-tRNA.EF-Tu.GTP complex up to the GTP hydrolysis stage on the ribosome. This Listeria monocytogenes serotype 4b (strain CLIP80459) protein is Elongation factor Ts.